Here is a 251-residue protein sequence, read N- to C-terminus: Ubiquinone/menaquinone biosynthesis C-methyltransferase UbiE (251 aa).

S-adenosyl-L-methionine-binding positions include Thr74, Asp95, 123-124 (NA), and Ser140.

Belongs to the class I-like SAM-binding methyltransferase superfamily. MenG/UbiE family.

It carries out the reaction a 2-demethylmenaquinol + S-adenosyl-L-methionine = a menaquinol + S-adenosyl-L-homocysteine + H(+). The catalysed reaction is a 2-methoxy-6-(all-trans-polyprenyl)benzene-1,4-diol + S-adenosyl-L-methionine = a 5-methoxy-2-methyl-3-(all-trans-polyprenyl)benzene-1,4-diol + S-adenosyl-L-homocysteine + H(+). The protein operates within quinol/quinone metabolism; menaquinone biosynthesis; menaquinol from 1,4-dihydroxy-2-naphthoate: step 2/2. Its pathway is cofactor biosynthesis; ubiquinone biosynthesis. Its function is as follows. Methyltransferase required for the conversion of demethylmenaquinol (DMKH2) to menaquinol (MKH2) and the conversion of 2-polyprenyl-6-methoxy-1,4-benzoquinol (DDMQH2) to 2-polyprenyl-3-methyl-6-methoxy-1,4-benzoquinol (DMQH2). The sequence is that of Ubiquinone/menaquinone biosynthesis C-methyltransferase UbiE from Escherichia coli O9:H4 (strain HS).